The following is a 264-amino-acid chain: Thymidylate synthase (264 aa).

DUMP is bound at residue Arg21. A (6R)-5,10-methylene-5,6,7,8-tetrahydrofolate-binding site is contributed by His51. Position 126–127 (126–127 (RR)) interacts with dUMP. The active-site Nucleophile is the Cys146. Residues 166–169 (RSAD), Asn177, and 207–209 (HLY) each bind dUMP. Residue Asp169 participates in (6R)-5,10-methylene-5,6,7,8-tetrahydrofolate binding. Position 263 (Ala263) interacts with (6R)-5,10-methylene-5,6,7,8-tetrahydrofolate.

Belongs to the thymidylate synthase family. Bacterial-type ThyA subfamily. Homodimer.

It is found in the cytoplasm. The catalysed reaction is dUMP + (6R)-5,10-methylene-5,6,7,8-tetrahydrofolate = 7,8-dihydrofolate + dTMP. It participates in pyrimidine metabolism; dTTP biosynthesis. Its function is as follows. Catalyzes the reductive methylation of 2'-deoxyuridine-5'-monophosphate (dUMP) to 2'-deoxythymidine-5'-monophosphate (dTMP) while utilizing 5,10-methylenetetrahydrofolate (mTHF) as the methyl donor and reductant in the reaction, yielding dihydrofolate (DHF) as a by-product. This enzymatic reaction provides an intracellular de novo source of dTMP, an essential precursor for DNA biosynthesis. This is Thymidylate synthase from Hahella chejuensis (strain KCTC 2396).